Here is a 157-residue protein sequence, read N- to C-terminus: Beta-defensin 125 (157 aa).

An N-terminal signal peptide occupies residues 1–20; it reads MNLLMLTFIICGLLTQVTKG. Disulfide bonds link cysteine 27–cysteine 55, cysteine 35–cysteine 49, and cysteine 39–cysteine 56. The interval 109–157 is disordered; sequence GETITPETNTPETTMPPSETTSSKTTMPPSETATSETMPPPSQTALTHN. Low complexity predominate over residues 110–140; that stretch reads ETITPETNTPETTMPPSETTSSKTTMPPSET. Residues 141–157 show a composition bias toward polar residues; sequence ATSETMPPPSQTALTHN.

This sequence belongs to the beta-defensin family.

The protein localises to the secreted. Functionally, has antibacterial activity. The sequence is that of Beta-defensin 125 (DEFB125) from Pongo pygmaeus (Bornean orangutan).